An 837-amino-acid chain; its full sequence is MKTKIFPLNKIAFACSLLLANPLAWAGDQFDASLWGDGSVLGVDFARFNVKNAVLPGRYEAQIYVKFEEKGVSDIIFADNPATGRTELCFTPKLQEMLDLMDEAIVKSPNSEDDTCVFASDAIPKGTFEYQSGEMKLKLELPQALTIRRPRGYIAPSRWQTGTNAAFANYDINYYRSGNPEVKSESLYVGLRSGVNFGNWALRHSGSFSRFENQSSSGFTDKGKNHYERGDTYLQRDFALLRGNVTVGDFFSTARIGENFGMRGLRIASDDRMLAPSQRGFAPVVRGVANTNAKVSIKQNGYTIYQITVPAGPFVINDLYASGYSGDLTVEIQESDGKVRSFIVPFSNLAPLMRVGHLRYQLAGGRYRIDSRTFDERVLQGVLQYGLTNHLTLNSSLLYTRHYRAGLFGFGLNTPIGAFSADATWSHAEFPLKHVSKNGYSLHGSYSINFNESGTNITLAAYRYSSRDFYTLSDTIGLNRTFRQFSGAYLPEIYRPKNQFQVSLSQSLGNWGNLYLSGQTYNYWEKRGTNTQYQVAYSNSFHILNYSVNLSQSIDKETGKRDNSIYLSLSLPLGDNHSADSSYSRSGNDINQRLGVNGSFGERHQWSYGINASRNNQGYRSYDGNLSHNNSIGSYRASYSRDSLKNRSISLGASGAVVAHKHGITLSQPVGESFAIIHAKDAAGAKVESGANVSLDYFGNAVMPYTSPYEINYIGINPSDAEANVEFEATERQIIPRANSISLVDFRTGKNTMVLFNLTLPNGEPVPMASTAQDSEGAFVGDVVQGGVLFANKLTQPKGELIVKWGERESEQCRFQYQVDLDNAQIQSHDIQCKTAK.

A signal peptide spans methionine 1–alanine 26. A disulfide bridge links cysteine 813 with cysteine 833.

It belongs to the fimbrial export usher family.

It localises to the cell outer membrane. In terms of biological role, essential for piliation. The protein is Outer membrane usher protein HifC (hifC) of Haemophilus influenzae.